Reading from the N-terminus, the 310-residue chain is Putative F-box protein PP2-B2 (310 aa).

The segment at 1–34 (MIQSTMGHKQSVDSRGKGRKVPGSSSMVQKHRVE) is disordered. Positions 44–90 (PSLFDNLPEDCISNIISFTSPRDACVAASVSKTFESAVNSDSVWDKF) constitute an F-box domain.

In Arabidopsis thaliana (Mouse-ear cress), this protein is Putative F-box protein PP2-B2 (PP2B2).